A 157-amino-acid chain; its full sequence is Large ribosomal subunit protein eL24 (157 aa).

The interval 94–157 (RNQKPEVRKA…ISAPRVGGKR (64 aa)) is disordered. Basic and acidic residues predominate over residues 96 to 117 (QKPEVRKAQREQAIRAAKESKK). Over residues 123–140 (KKPAAASAKTSAKTAQKP) the composition is skewed to low complexity.

It belongs to the eukaryotic ribosomal protein eL24 family. In terms of assembly, component of the large ribosomal subunit.

It localises to the cytoplasm. Its function is as follows. Component of the large ribosomal subunit. The ribosome is a large ribonucleoprotein complex responsible for the synthesis of proteins in the cell. This Gillichthys mirabilis (Long-jawed mudsucker) protein is Large ribosomal subunit protein eL24 (rpl24).